The chain runs to 131 residues: D-ribose pyranase (131 aa).

Histidine 20 (proton donor) is an active-site residue. Residues aspartate 28, histidine 98, and tyrosine 120–asparagine 122 contribute to the substrate site.

Belongs to the RbsD / FucU family. RbsD subfamily. In terms of assembly, homodecamer.

Its subcellular location is the cytoplasm. It catalyses the reaction beta-D-ribopyranose = beta-D-ribofuranose. It functions in the pathway carbohydrate metabolism; D-ribose degradation; D-ribose 5-phosphate from beta-D-ribopyranose: step 1/2. Functionally, catalyzes the interconversion of beta-pyran and beta-furan forms of D-ribose. The polypeptide is D-ribose pyranase (Bacillus mycoides (strain KBAB4) (Bacillus weihenstephanensis)).